Reading from the N-terminus, the 792-residue chain is Xaa-Pro dipeptidyl-peptidase (792 aa).

Catalysis depends on charge relay system residues serine 363, aspartate 482, and histidine 513.

Belongs to the peptidase S15 family. In terms of assembly, homodimer.

The protein localises to the cytoplasm. The enzyme catalyses Hydrolyzes Xaa-Pro-|- bonds to release unblocked, N-terminal dipeptides from substrates including Ala-Pro-|-p-nitroanilide and (sequentially) Tyr-Pro-|-Phe-Pro-|-Gly-Pro-|-Ile.. Functionally, removes N-terminal dipeptides sequentially from polypeptides having unsubstituted N-termini provided that the penultimate residue is proline. In Lactobacillus delbrueckii subsp. lactis, this protein is Xaa-Pro dipeptidyl-peptidase (pepX).